The primary structure comprises 110 residues: Large ribosomal subunit protein uL22 (110 aa).

This sequence belongs to the universal ribosomal protein uL22 family. In terms of assembly, part of the 50S ribosomal subunit.

This protein binds specifically to 23S rRNA; its binding is stimulated by other ribosomal proteins, e.g. L4, L17, and L20. It is important during the early stages of 50S assembly. It makes multiple contacts with different domains of the 23S rRNA in the assembled 50S subunit and ribosome. Its function is as follows. The globular domain of the protein is located near the polypeptide exit tunnel on the outside of the subunit, while an extended beta-hairpin is found that lines the wall of the exit tunnel in the center of the 70S ribosome. The polypeptide is Large ribosomal subunit protein uL22 (Vesicomyosocius okutanii subsp. Calyptogena okutanii (strain HA)).